A 673-amino-acid chain; its full sequence is UvrABC system protein B (673 aa).

The Helicase ATP-binding domain occupies Glu26–Arg183. Residue Gly39 to Thr46 coordinates ATP. Positions Tyr92–Val115 match the Beta-hairpin motif. The Helicase C-terminal domain maps to Gln431–Leu597. The UVR domain occupies Gln633 to Leu668.

Belongs to the UvrB family. In terms of assembly, forms a heterotetramer with UvrA during the search for lesions. Interacts with UvrC in an incision complex.

It localises to the cytoplasm. Its function is as follows. The UvrABC repair system catalyzes the recognition and processing of DNA lesions. A damage recognition complex composed of 2 UvrA and 2 UvrB subunits scans DNA for abnormalities. Upon binding of the UvrA(2)B(2) complex to a putative damaged site, the DNA wraps around one UvrB monomer. DNA wrap is dependent on ATP binding by UvrB and probably causes local melting of the DNA helix, facilitating insertion of UvrB beta-hairpin between the DNA strands. Then UvrB probes one DNA strand for the presence of a lesion. If a lesion is found the UvrA subunits dissociate and the UvrB-DNA preincision complex is formed. This complex is subsequently bound by UvrC and the second UvrB is released. If no lesion is found, the DNA wraps around the other UvrB subunit that will check the other stand for damage. This chain is UvrABC system protein B, found in Salmonella agona (strain SL483).